Reading from the N-terminus, the 89-residue chain is Endoribonuclease VapD 1 (89 aa).

Belongs to the VapD ribonuclease family. Homodimer.

Its function is as follows. Cleaves ssRNA, mostly between U:A. The sequence is that of Endoribonuclease VapD 1 from Riemerella anatipestifer (Moraxella anatipestifer).